Reading from the N-terminus, the 145-residue chain is MRRLLDFLRRGLIRPDPRHAQGKRAEAQGLRLLRAQGLRLLARNARNRHGELDLIMLDGEVLVVVEVRWRSGSAFGGAAASIGPAKQARLARAAACWLAGSEHAGRRLRFDVLAFEAGQARWLRGAFEPPAYIASQALRARGRRR.

The protein belongs to the UPF0102 family.

This Bordetella avium (strain 197N) protein is UPF0102 protein BAV3162.